A 621-amino-acid chain; its full sequence is Endoglucanase 25 (621 aa).

Residues 1–26 (MYGRDPWGGPLEINTADSATDDDRSR) are disordered. Residues 1 to 70 (MYGRDPWGGP…DLGCIIVSRK (70 aa)) are Cytoplasmic-facing. Residues 48-49 (LL) form a polarized targeting signal 1 (PTS1) region. The tract at residues 59–62 (YVDL) is polarized targeting signal 2 (PTS2). The helical; Signal-anchor for type II membrane protein transmembrane segment at 71 to 91 (IFVWTVGTLVAAALLAGFITL) threads the bilayer. At 92 to 621 (IVKTVPRHHP…PPPPPAPWKP (530 aa)) the chain is on the extracellular side. Residues Asn-108 and Asn-133 are each glycosylated (N-linked (GlcNAc...) asparagine). The active-site Nucleophile is Asp-165. N-linked (GlcNAc...) asparagine glycosylation is found at Asn-216, Asn-324, Asn-345, Asn-408, and Asn-425. Active-site residues include His-513 and Asp-561. An N-linked (GlcNAc...) asparagine glycan is attached at Asn-567. Glu-570 is an active-site residue.

Belongs to the glycosyl hydrolase 9 (cellulase E) family. Post-translationally, glycosylated. N-glycosylation of KOR in the endoplasmic reticulum followed by N-glycan modifications in the Golgi are essential for catalytic activity. In terms of tissue distribution, highly expressed in roots and stems, at intermediate levels in leaves and flowers, and at lower levels in siliques. Expressed in xylem (at protein level).

It localises to the cell membrane. The catalysed reaction is Endohydrolysis of (1-&gt;4)-beta-D-glucosidic linkages in cellulose, lichenin and cereal beta-D-glucans.. Functionally, required for cellulose microfibril formation. Involved in cell wall assembly during cell elongation and cell plate maturation in cytokinesis. Required for secondary cell wall formation in the developing xylem. May cycle through different intracellular compartments, including plasma membrane. In Arabidopsis thaliana (Mouse-ear cress), this protein is Endoglucanase 25 (KOR).